A 339-amino-acid chain; its full sequence is MVREEVAGSTQTLQWKCVESRVDSKRLYYGRFILSPLRKGQADTVGIALRRALLGEIEGTCITRAKFGSXPHEYSTIAGIEESVQEILLNLKEIVLRSNLYGVRDASICVKGPRYITAQDIILPPSVEIVDTXQPIANLTEPIDFCIDLQIKRDRGYQTELRKNYQDGSYPIXXVSMPVRNVNYSIFSCGNGNEKHEILFLEIWTNGSLTPKEALYEASRNLIDLFLPFLHAEEEGTSFEENKNRFTPPLFTFQKRLTNLKKNKKGIPLNCIFIDQLELTSRTYNCLKRANIHTLLDLLSKTEEDLMRIDSFRMEDRKHIWDTLEKHLPIDLLKNKLSF.

Positions 1–233 (MVREEVAGST…DLFLPFLHAE (233 aa)) are alpha N-terminal domain (alpha-NTD). The interval 264–339 (KKGIPLNCIF…IDLLKNKLSF (76 aa)) is alpha C-terminal domain (alpha-CTD).

This sequence belongs to the RNA polymerase alpha chain family. In terms of assembly, in plastids the minimal PEP RNA polymerase catalytic core is composed of four subunits: alpha, beta, beta', and beta''. When a (nuclear-encoded) sigma factor is associated with the core the holoenzyme is formed, which can initiate transcription.

Its subcellular location is the plastid. The protein resides in the chloroplast. The enzyme catalyses RNA(n) + a ribonucleoside 5'-triphosphate = RNA(n+1) + diphosphate. In terms of biological role, DNA-dependent RNA polymerase catalyzes the transcription of DNA into RNA using the four ribonucleoside triphosphates as substrates. The protein is DNA-directed RNA polymerase subunit alpha of Psathyrostachys stoloniformis.